The chain runs to 140 residues: Large ribosomal subunit protein uL16c (140 aa).

This sequence belongs to the universal ribosomal protein uL16 family. In terms of assembly, part of the 50S ribosomal subunit.

The protein localises to the plastid. It localises to the chloroplast. The sequence is that of Large ribosomal subunit protein uL16c from Cyanidium caldarium (Red alga).